The sequence spans 215 residues: Small ribosomal subunit protein uS5 (215 aa).

Residues 1-62 (MTDSSPQSNP…QERDSEWQER (62 aa)) form a disordered region. Over residues 9–28 (NPNAVPGAADVPAAAEGQQQ) the composition is skewed to low complexity. Residues 29–61 (EQRRGGGRGERGDRRGGRRGDRRNQERDSEWQE) show a composition bias toward basic and acidic residues. One can recognise an S5 DRBM domain in the interval 59–122 (WQERVVQIRR…ADGKKHLVKV (64 aa)).

It belongs to the universal ribosomal protein uS5 family. As to quaternary structure, part of the 30S ribosomal subunit. Contacts proteins S4 and S8.

Functionally, with S4 and S12 plays an important role in translational accuracy. In terms of biological role, located at the back of the 30S subunit body where it stabilizes the conformation of the head with respect to the body. The polypeptide is Small ribosomal subunit protein uS5 (Parasynechococcus marenigrum (strain WH8102)).